We begin with the raw amino-acid sequence, 597 residues long: Elongation factor 4 (597 aa).

Residues 2–184 (KNIRNFSIIA…SIVEHLPAPE (183 aa)) form the tr-type G domain. GTP-binding positions include 14 to 19 (DHGKST) and 131 to 134 (NKID).

The protein belongs to the TRAFAC class translation factor GTPase superfamily. Classic translation factor GTPase family. LepA subfamily.

It is found in the cell inner membrane. It carries out the reaction GTP + H2O = GDP + phosphate + H(+). Required for accurate and efficient protein synthesis under certain stress conditions. May act as a fidelity factor of the translation reaction, by catalyzing a one-codon backward translocation of tRNAs on improperly translocated ribosomes. Back-translocation proceeds from a post-translocation (POST) complex to a pre-translocation (PRE) complex, thus giving elongation factor G a second chance to translocate the tRNAs correctly. Binds to ribosomes in a GTP-dependent manner. The polypeptide is Elongation factor 4 (Desulfotalea psychrophila (strain LSv54 / DSM 12343)).